The following is a 158-amino-acid chain: Inorganic pyrophosphatase (158 aa).

Residue E8 participates in Mg(2+) binding. Residues K16, R30, and Y42 each coordinate substrate. Mg(2+) contacts are provided by D52, D57, D84, and D89. D89 acts as the Proton acceptor in catalysis. Y125 is a binding site for substrate.

This sequence belongs to the PPase family. In terms of assembly, homohexamer. It depends on Mg(2+) as a cofactor.

The protein localises to the cytoplasm. The catalysed reaction is diphosphate + H2O = 2 phosphate + H(+). Catalyzes the hydrolysis of inorganic pyrophosphate (PPi) forming two phosphate ions. The sequence is that of Inorganic pyrophosphatase from Corynebacterium efficiens (strain DSM 44549 / YS-314 / AJ 12310 / JCM 11189 / NBRC 100395).